Reading from the N-terminus, the 861-residue chain is Bifunctional uridylyltransferase/uridylyl-removing enzyme (861 aa).

The tract at residues 1–321 (MKNDNRIIKN…VYHQKQKIIR (321 aa)) is uridylyltransferase. A uridylyl-removing region spans residues 322-678 (LDDEFQLSNR…IMPHHSQGGT (357 aa)). The HD domain maps to 440-562 (VDQHTLFVIR…LPHARYLDYL (123 aa)). 2 ACT domains span residues 679-760 (EVFI…AVSR) and 788-861 (QLFL…KSKY).

The protein belongs to the GlnD family. Mg(2+) serves as cofactor.

The catalysed reaction is [protein-PII]-L-tyrosine + UTP = [protein-PII]-uridylyl-L-tyrosine + diphosphate. The enzyme catalyses [protein-PII]-uridylyl-L-tyrosine + H2O = [protein-PII]-L-tyrosine + UMP + H(+). With respect to regulation, uridylyltransferase (UTase) activity is inhibited by glutamine, while glutamine activates uridylyl-removing (UR) activity. In terms of biological role, modifies, by uridylylation and deuridylylation, the PII regulatory proteins (GlnB and homologs), in response to the nitrogen status of the cell that GlnD senses through the glutamine level. Under low glutamine levels, catalyzes the conversion of the PII proteins and UTP to PII-UMP and PPi, while under higher glutamine levels, GlnD hydrolyzes PII-UMP to PII and UMP (deuridylylation). Thus, controls uridylylation state and activity of the PII proteins, and plays an important role in the regulation of nitrogen assimilation and metabolism. The polypeptide is Bifunctional uridylyltransferase/uridylyl-removing enzyme (Legionella pneumophila (strain Corby)).